The primary structure comprises 439 residues: Enolase 2 (439 aa).

The substrate site is built by histidine 160 and glutamate 169. The active-site Proton donor is glutamate 212. Mg(2+) is bound by residues aspartate 247, glutamate 296, and aspartate 323. 2 residues coordinate substrate: glutamate 296 and aspartate 323. Lysine 348 serves as the catalytic Proton acceptor. Substrate contacts are provided by residues 375-378 and lysine 399; that span reads SHRS.

It belongs to the enolase family. In terms of assembly, homodimer. The cofactor is Mg(2+).

The protein localises to the cytoplasm. It catalyses the reaction (2R)-2-phosphoglycerate = phosphoenolpyruvate + H2O. The protein operates within carbohydrate degradation; glycolysis; pyruvate from D-glyceraldehyde 3-phosphate: step 4/5. This chain is Enolase 2 (ENO2), found in Debaryomyces hansenii (strain ATCC 36239 / CBS 767 / BCRC 21394 / JCM 1990 / NBRC 0083 / IGC 2968) (Yeast).